Reading from the N-terminus, the 276-residue chain is D-apionate oxidoisomerase (276 aa).

Residues 12–14 (GKM), E33, and D69 each bind NAD(+). Positions 114 and 184 each coordinate Zn(2+).

Belongs to the ApnO family. It depends on Zn(2+) as a cofactor.

It catalyses the reaction D-apionate + NAD(+) = 3-oxoisoapionate + NADH + H(+). It participates in carbohydrate metabolism. In terms of biological role, involved in catabolism of D-apiose. Catalyzes the conversion of D-apionate to 3-oxo-isoapionate. This is D-apionate oxidoisomerase from Cupriavidus necator (strain ATCC 43291 / DSM 13513 / CCUG 52238 / LMG 8453 / N-1) (Ralstonia eutropha).